Consider the following 166-residue polypeptide: Crossover junction endodeoxyribonuclease RuvC (166 aa).

Active-site residues include D11, E70, and D142. The Mg(2+) site is built by D11, E70, and D142.

It belongs to the RuvC family. As to quaternary structure, homodimer which binds Holliday junction (HJ) DNA. The HJ becomes 2-fold symmetrical on binding to RuvC with unstacked arms; it has a different conformation from HJ DNA in complex with RuvA. In the full resolvosome a probable DNA-RuvA(4)-RuvB(12)-RuvC(2) complex forms which resolves the HJ. Requires Mg(2+) as cofactor.

The protein resides in the cytoplasm. The enzyme catalyses Endonucleolytic cleavage at a junction such as a reciprocal single-stranded crossover between two homologous DNA duplexes (Holliday junction).. In terms of biological role, the RuvA-RuvB-RuvC complex processes Holliday junction (HJ) DNA during genetic recombination and DNA repair. Endonuclease that resolves HJ intermediates. Cleaves cruciform DNA by making single-stranded nicks across the HJ at symmetrical positions within the homologous arms, yielding a 5'-phosphate and a 3'-hydroxyl group; requires a central core of homology in the junction. The consensus cleavage sequence is 5'-(A/T)TT(C/G)-3'. Cleavage occurs on the 3'-side of the TT dinucleotide at the point of strand exchange. HJ branch migration catalyzed by RuvA-RuvB allows RuvC to scan DNA until it finds its consensus sequence, where it cleaves and resolves the cruciform DNA. In Nitratidesulfovibrio vulgaris (strain ATCC 29579 / DSM 644 / CCUG 34227 / NCIMB 8303 / VKM B-1760 / Hildenborough) (Desulfovibrio vulgaris), this protein is Crossover junction endodeoxyribonuclease RuvC.